The chain runs to 227 residues: ATP-dependent dethiobiotin synthetase BioD (227 aa).

12–17 contacts ATP; the sequence is DVGKTV. Residue threonine 16 coordinates Mg(2+). Lysine 37 is an active-site residue. Position 41 (threonine 41) interacts with substrate. ATP is bound by residues aspartate 50, 110–113, 171–172, and 201–203; these read EGAG, GS, and PAG. Residues aspartate 50 and glutamate 110 each contribute to the Mg(2+) site.

This sequence belongs to the dethiobiotin synthetase family. Homodimer. It depends on Mg(2+) as a cofactor.

Its subcellular location is the cytoplasm. The enzyme catalyses (7R,8S)-7,8-diammoniononanoate + CO2 + ATP = (4R,5S)-dethiobiotin + ADP + phosphate + 3 H(+). It functions in the pathway cofactor biosynthesis; biotin biosynthesis; biotin from 7,8-diaminononanoate: step 1/2. Catalyzes a mechanistically unusual reaction, the ATP-dependent insertion of CO2 between the N7 and N8 nitrogen atoms of 7,8-diaminopelargonic acid (DAPA, also called 7,8-diammoniononanoate) to form a ureido ring. The polypeptide is ATP-dependent dethiobiotin synthetase BioD (Rhodococcus erythropolis (strain PR4 / NBRC 100887)).